A 1119-amino-acid chain; its full sequence is Transient receptor potential cation channel subfamily A member 1 (1119 aa).

At 1 to 718 (MKRSLRKMWR…MKWLAYGFRA (718 aa)) the chain is on the cytoplasmic side. ANK repeat units follow at residues 62 to 92 (MDTFFLHYAAAEGQIELMEKITRDSSLEVLH), 97 to 126 (YGNTPLHCAVEKNQIESVKFLLSRGANPNL), 130 to 160 (NMMAPLHIAVQGMNNEVMKVLLEHRTIDVNL), 164 to 193 (NGNTAVIIACTTNNSEALQILLKKGAKPCK), 197 to 226 (WGCFPIHQAAFSGSKECMEIILRFGEEHGY), 238 to 267 (GKATPLHLAVQNGDLEMIKMCLDNGAQIDP), 271 to 301 (GRCTAIHFAATQGATEIVKLMISSYSGSVDI), 308 to 337 (CHETMLHRASLFDHHELADYLISVGADINK), 341 to 370 (EGRSPLILATASASWNIVNLLLSKGAQVDI), 374 to 403 (FGRNFLHLTVQQPYGLKNLRPEFMQMQQIK), 412 to 441 (DGCTPLHYACRQGGPGSVNNLLGFNVSIHS), 445 to 474 (DKKSPLHFAASYGRINTCQRLLQDISDTRL), 481 to 510 (HGMTPLHLAAKNGHDKVVQLLLKKGALFLS), 513 to 542 (NGWTALHHASMGGYTQTMKVILDTNLKCTD), 547 to 576 (DGNTALHFAAREGHAKAVALLLSHNADIVL), and 579 to 609 (QQASFLHLALHNKRKEVVLTIIRSKRWDECL). 5 disulfides stabilise this stretch: Cys-192-Cys-665, Cys-462-Cys-665, Cys-608-Cys-621, Cys-621-Cys-665, and Cys-633-Cys-856. Pro-394 is modified (4-hydroxyproline; by EGLN1; transient; in normoxia and hyperoxia). Residues Cys-414 and Cys-421 each contribute to the (E)-cinnamaldehyde site. Cys-621 serves as a coordination point for (E)-cinnamaldehyde. Residue Cys-633 is modified to Cysteine sulfenic acid (-SOH); transient; in hyperoxia. 3 residues coordinate (E)-cinnamaldehyde: Cys-641, Cys-665, and Lys-710. A helical transmembrane segment spans residues 719-739 (HMMNLGSYCLGLIPMTILVVN). Residues 740 to 767 (IKPGMAFNSTGIINETSDHSEILDTTNS) lie on the Extracellular side of the membrane. Asn-747 and Asn-753 each carry an N-linked (GlcNAc...) asparagine glycan. A helical transmembrane segment spans residues 768 to 793 (YLIKTCMILVFLSSIFGYCKEAGQIF). Positions 788 and 791 each coordinate Ca(2+). The Cytoplasmic segment spans residues 794–798 (QQKRN). A helical transmembrane segment spans residues 799-823 (YFMDISNVLEWIIYTTGIIFVLPLF). Residues Asn-805 and Glu-808 each coordinate Ca(2+). The Extracellular portion of the chain corresponds to 824–829 (VEIPAH). Residues 830–850 (LQWQCGAIAVYFYWMNFLLYL) form a helical membrane-spanning segment. At 851–862 (QRFENCGIFIVM) the chain is on the cytoplasmic side. A Cysteine sulfenic acid (-SOH); transient; in hyperoxia modification is found at Cys-856. Residues 863–892 (LEVILKTLLRSTVVFIFLLLAFGLSFYILL) form a helical membrane-spanning segment. The Extracellular portion of the chain corresponds to 893–901 (NLQDPFSSP). Residues 902-922 (LLSIIQTFSMMLGDINYRESF) constitute an intramembrane region (pore-forming). Residues 923–933 (LEPYLRNELAH) are Extracellular-facing. A helical membrane pass occupies residues 934–960 (PVLSFAQLVSFTIFVPIVLMNLLIGLA). The Cytoplasmic segment spans residues 961–1119 (VGDIAEVQKH…VKAKTHHLEP (159 aa)). A coiled-coil region spans residues 1042-1071 (MEILKQKYRLKDLTFLLEKQHELIKLIIQK). 1046-1052 (KQKYRLK) lines the a 1,2-diacyl-sn-glycero-3-phospho-(1D-myo-inositol) pocket.

This sequence belongs to the transient receptor (TC 1.A.4) family. As to quaternary structure, homotetramer. Interacts with TMEM100. Interacts with EGLN1. Interacts with the scorpion wasabi receptor toxin at the same site that electrophiles but in a non-covalent manner. In terms of processing, TRPA1 activation by electrophiles occurs though covalent modification of specific cysteine residues in the N-terminal cytoplasmic domain. Post-translationally, hydroxylation is required for TRPA1 activity inhibition in normoxia. In hypoxia, the decrease in oxygen concentration diminishes the activity of the hydroxylase EGLN1, thus relieving TRPA1 from inhibition and ultimately leading to channel activation. Oxidation of Cys-633 and Cys-856 in hyperoxia may override the hydroxylase EGLN1-mediated inhibition, causing TRPA1 activation.

It localises to the cell membrane. The enzyme catalyses Ca(2+)(in) = Ca(2+)(out). The catalysed reaction is Mg(2+)(in) = Mg(2+)(out). It carries out the reaction Na(+)(in) = Na(+)(out). It catalyses the reaction K(+)(in) = K(+)(out). The enzyme catalyses Zn(2+)(in) = Zn(2+)(out). Electrophilic ligands activate the channel by covalent modification of intracellular cysteines; Cys-621 plays a key role in covalent binding of electrophiles. Extracellular Ca(2+) both potentiates and inactivates TRPA1; a rapid potentiation follows by slow desensitization. Activated by increase in intracellular Ca(2+) concentration. Inhibited by the potent blocker of TRPV channels ruthenium red, A-967079, AP-18, HC-030031, and aryl sulfonamide derivative (S)-N-(4-chlorobenzyl)-1-((4-fluorophenyl)sulfonyl)pyrrolidine-2-carboxamide (ASD). Activated by benzyl isothiocyanate (BITC), iodoacetamide, sulfhydryl reactive agent MTSEA, N-methyl maleimide (NMM), N-ethylmaleimide (NEM), and 2-aminoethyldiphenylborinate (2-APB). Also activated by hyperoxia. Acivated by intracellular Zn(2+). TRPA1 activation may critically depend on the presence of small intracellular compounds such as polyphosphates. Functionally, ligand-activated Ca(2+)-permeable, nonselective cation channel involved in pain detection and possibly also in cold perception, oxygen concentration perception, cough, itch, and inner ear function. Has a relatively high Ca(2+) selectivity, with a preference for divalent over monovalent cations (Ca(2+) &gt; Ba(2+) &gt; Mg(2+) &gt; NH4(+) &gt; Li(+) &gt; K(+)), the influx of cation into the cytoplasm leads to membrane depolarization. Has a central role in the pain response to endogenous inflammatory mediators, such as bradykinin and to a diverse array of irritants. Activated by a large variety of structurally unrelated electrophilic and non-electrophilic chemical compounds, such as allylthiocyanate (AITC) from mustard oil or wasabi, cinnamaldehyde, diallyl disulfide (DADS) from garlic, and acrolein, an environmental irritant. Electrophilic ligands activate TRPA1 by interacting with critical N-terminal Cys residues in a covalent manner. Non-electrophile agonists bind at distinct sites in the transmembrane domain to promote channel activation. Also acts as an ionotropic cannabinoid receptor by being activated by delta(9)-tetrahydrocannabinol (THC), the psychoactive component of marijuana. May be a component for the mechanosensitive transduction channel of hair cells in inner ear, thereby participating in the perception of sounds. The chain is Transient receptor potential cation channel subfamily A member 1 from Homo sapiens (Human).